We begin with the raw amino-acid sequence, 527 residues long: Glutamate--cysteine ligase (527 aa).

It belongs to the glutamate--cysteine ligase type 1 family. Type 1 subfamily.

The enzyme catalyses L-cysteine + L-glutamate + ATP = gamma-L-glutamyl-L-cysteine + ADP + phosphate + H(+). It participates in sulfur metabolism; glutathione biosynthesis; glutathione from L-cysteine and L-glutamate: step 1/2. The sequence is that of Glutamate--cysteine ligase from Pseudomonas aeruginosa (strain UCBPP-PA14).